Here is a 176-residue protein sequence, read N- to C-terminus: Protein FAM89A (176 aa).

Positions 140-165 are disordered; it reads DFQEQGSLRDGQGRGSPGDPSLPLTH.

Belongs to the FAM89 family.

This Rattus norvegicus (Rat) protein is Protein FAM89A (Fam89a).